Consider the following 257-residue polypeptide: Small ribosomal subunit protein uS15m (257 aa).

The transit peptide at 1 to 57 (MLRVAWRTLSLIRTRAVTQVLVPGLPGGGSAKFPFNQWGLQPRSLLLQAARGYVVRK) directs the protein to the mitochondrion. The interval 225 to 257 (RALKAAAAAQKQAKRRNPDSPAKAIPKTLKDSQ) is disordered.

It belongs to the universal ribosomal protein uS15 family. As to quaternary structure, component of the mitochondrial small ribosomal subunit (mt-SSU). Mature mammalian 55S mitochondrial ribosomes consist of a small (28S) and a large (39S) subunit. The 28S small subunit contains a 12S ribosomal RNA (12S mt-rRNA) and 30 different proteins. The 39S large subunit contains a 16S rRNA (16S mt-rRNA), a copy of mitochondrial valine transfer RNA (mt-tRNA(Val)), which plays an integral structural role, and 52 different proteins. Interacts with METTL17.

It is found in the mitochondrion matrix. This chain is Small ribosomal subunit protein uS15m (MRPS15), found in Homo sapiens (Human).